The sequence spans 160 residues: MTTENNKPPVKTANQRGAARLAAVQALYQMDIGGTGVLEVVAEYETHRLGQEIDGETYLKADASWFRSIVAGVVRDQTKIDPLIRQALQDDWSLARVDSTVRAILRAGTFELLERKDVPIAVIVTEYVEIAHAFFQEDEPKLVNAVLDRIAKQVRVPAVK.

The protein belongs to the NusB family.

Involved in transcription antitermination. Required for transcription of ribosomal RNA (rRNA) genes. Binds specifically to the boxA antiterminator sequence of the ribosomal RNA (rrn) operons. In Allorhizobium ampelinum (strain ATCC BAA-846 / DSM 112012 / S4) (Agrobacterium vitis (strain S4)), this protein is Transcription antitermination protein NusB.